The following is a 201-amino-acid chain: Holliday junction branch migration complex subunit RuvA (201 aa).

Positions 1–63 (MYDYIKGTVT…EDNISLFGFQ (63 aa)) are domain I. A domain II region spans residues 64 to 142 (TTEERYLFKK…DVVASEIVYV (79 aa)). Residues 143-153 (APENDMVAGLS) are flexible linker. The domain III stretch occupies residues 153-201 (SPQLEEAVLALEALGYSTRELKKVIPKLAKEADLTSDAYIKLALQLMTK).

It belongs to the RuvA family. In terms of assembly, homotetramer. Forms an RuvA(8)-RuvB(12)-Holliday junction (HJ) complex. HJ DNA is sandwiched between 2 RuvA tetramers; dsDNA enters through RuvA and exits via RuvB. An RuvB hexamer assembles on each DNA strand where it exits the tetramer. Each RuvB hexamer is contacted by two RuvA subunits (via domain III) on 2 adjacent RuvB subunits; this complex drives branch migration. In the full resolvosome a probable DNA-RuvA(4)-RuvB(12)-RuvC(2) complex forms which resolves the HJ.

It localises to the cytoplasm. The RuvA-RuvB-RuvC complex processes Holliday junction (HJ) DNA during genetic recombination and DNA repair, while the RuvA-RuvB complex plays an important role in the rescue of blocked DNA replication forks via replication fork reversal (RFR). RuvA specifically binds to HJ cruciform DNA, conferring on it an open structure. The RuvB hexamer acts as an ATP-dependent pump, pulling dsDNA into and through the RuvAB complex. HJ branch migration allows RuvC to scan DNA until it finds its consensus sequence, where it cleaves and resolves the cruciform DNA. The sequence is that of Holliday junction branch migration complex subunit RuvA from Listeria monocytogenes serovar 1/2a (strain ATCC BAA-679 / EGD-e).